The following is a 261-amino-acid chain: Putative hydro-lyase Nther_1142 (261 aa).

Belongs to the D-glutamate cyclase family.

This is Putative hydro-lyase Nther_1142 from Natranaerobius thermophilus (strain ATCC BAA-1301 / DSM 18059 / JW/NM-WN-LF).